Reading from the N-terminus, the 395-residue chain is 1-deoxy-D-xylulose 5-phosphate reductoisomerase (395 aa).

Positions 15, 16, 17, 18, 41, 43, and 126 each coordinate NADPH. Residue lysine 127 participates in 1-deoxy-D-xylulose 5-phosphate binding. Residue glutamate 128 participates in NADPH binding. Residue aspartate 152 participates in Mn(2+) binding. Positions 153, 154, 178, and 201 each coordinate 1-deoxy-D-xylulose 5-phosphate. Glutamate 154 serves as a coordination point for Mn(2+). Residue glycine 207 participates in NADPH binding. 1-deoxy-D-xylulose 5-phosphate is bound by residues serine 214, asparagine 219, lysine 220, and glutamate 223. Glutamate 223 lines the Mn(2+) pocket.

The protein belongs to the DXR family. Mg(2+) is required as a cofactor. Mn(2+) serves as cofactor.

The catalysed reaction is 2-C-methyl-D-erythritol 4-phosphate + NADP(+) = 1-deoxy-D-xylulose 5-phosphate + NADPH + H(+). It participates in isoprenoid biosynthesis; isopentenyl diphosphate biosynthesis via DXP pathway; isopentenyl diphosphate from 1-deoxy-D-xylulose 5-phosphate: step 1/6. Catalyzes the NADPH-dependent rearrangement and reduction of 1-deoxy-D-xylulose-5-phosphate (DXP) to 2-C-methyl-D-erythritol 4-phosphate (MEP). The chain is 1-deoxy-D-xylulose 5-phosphate reductoisomerase from Ruegeria sp. (strain TM1040) (Silicibacter sp.).